The primary structure comprises 161 residues: Transcriptional regulator MraZ (161 aa).

SpoVT-AbrB domains are found at residues 7–55 (RYTN…GPAF) and 84–127 (SAEL…EPGA).

This sequence belongs to the MraZ family. In terms of assembly, forms oligomers.

It is found in the cytoplasm. It localises to the nucleoid. The chain is Transcriptional regulator MraZ from Parvibaculum lavamentivorans (strain DS-1 / DSM 13023 / NCIMB 13966).